The sequence spans 119 residues: Acidic phospholipase A2 DE-II (119 aa).

7 cysteine pairs are disulfide-bonded: Cys11/Cys72, Cys26/Cys118, Cys28/Cys44, Cys43/Cys99, Cys50/Cys92, Cys60/Cys85, and Cys79/Cys90. Residues Tyr27, Gly29, and Gly31 each contribute to the Ca(2+) site. The active site involves His47. Asp48 is a Ca(2+) binding site. The active site involves Asp93.

This sequence belongs to the phospholipase A2 family. Group I subfamily. D49 sub-subfamily. Ca(2+) serves as cofactor. As to expression, expressed by the venom gland.

The protein localises to the secreted. The enzyme catalyses a 1,2-diacyl-sn-glycero-3-phosphocholine + H2O = a 1-acyl-sn-glycero-3-phosphocholine + a fatty acid + H(+). PLA2 catalyzes the calcium-dependent hydrolysis of the 2-acyl groups in 3-sn-phosphoglycerides. The protein is Acidic phospholipase A2 DE-II of Naja melanoleuca (Forest cobra).